Reading from the N-terminus, the 186-residue chain is ATP synthase subunit delta (186 aa).

Belongs to the ATPase delta chain family. F-type ATPases have 2 components, F(1) - the catalytic core - and F(0) - the membrane proton channel. F(1) has five subunits: alpha(3), beta(3), gamma(1), delta(1), epsilon(1). CF(0) has four main subunits: a(1), b(1), b'(1) and c(10-14). The alpha and beta chains form an alternating ring which encloses part of the gamma chain. F(1) is attached to F(0) by a central stalk formed by the gamma and epsilon chains, while a peripheral stalk is formed by the delta, b and b' chains.

The protein resides in the cell inner membrane. Functionally, f(1)F(0) ATP synthase produces ATP from ADP in the presence of a proton or sodium gradient. F-type ATPases consist of two structural domains, F(1) containing the extramembraneous catalytic core and F(0) containing the membrane proton channel, linked together by a central stalk and a peripheral stalk. During catalysis, ATP synthesis in the catalytic domain of F(1) is coupled via a rotary mechanism of the central stalk subunits to proton translocation. This protein is part of the stalk that links CF(0) to CF(1). It either transmits conformational changes from CF(0) to CF(1) or is implicated in proton conduction. This Rhodopseudomonas palustris (strain BisA53) protein is ATP synthase subunit delta.